The chain runs to 161 residues: Cytochrome c-type biogenesis protein CcmE (161 aa).

Topologically, residues 1–8 (MNPRRQKR) are cytoplasmic. Residues 9 to 29 (LGIILAILIGVSATIGLMIYA) form a helical; Signal-anchor for type II membrane protein membrane-spanning segment. Topologically, residues 30 to 161 (LNQNMDLFYT…SEEQKQGSGQ (132 aa)) are periplasmic. Heme is bound by residues histidine 129 and tyrosine 133.

This sequence belongs to the CcmE/CycJ family.

It is found in the cell inner membrane. Heme chaperone required for the biogenesis of c-type cytochromes. Transiently binds heme delivered by CcmC and transfers the heme to apo-cytochromes in a process facilitated by CcmF and CcmH. This chain is Cytochrome c-type biogenesis protein CcmE, found in Vibrio vulnificus (strain CMCP6).